Reading from the N-terminus, the 407-residue chain is 8-amino-7-oxononanoate synthase (407 aa).

Arg-24 is a binding site for substrate. Position 111-112 (111-112 (GF)) interacts with pyridoxal 5'-phosphate. His-137 contributes to the substrate binding site. Ser-183, His-211, and Thr-239 together coordinate pyridoxal 5'-phosphate. Position 242 is an N6-(pyridoxal phosphate)lysine (Lys-242). Thr-356 lines the substrate pocket.

The protein belongs to the class-II pyridoxal-phosphate-dependent aminotransferase family. BioF subfamily. In terms of assembly, homodimer. Requires pyridoxal 5'-phosphate as cofactor.

It carries out the reaction 6-carboxyhexanoyl-[ACP] + L-alanine + H(+) = (8S)-8-amino-7-oxononanoate + holo-[ACP] + CO2. It functions in the pathway cofactor biosynthesis; biotin biosynthesis. Functionally, catalyzes the decarboxylative condensation of pimeloyl-[acyl-carrier protein] and L-alanine to produce 8-amino-7-oxononanoate (AON), [acyl-carrier protein], and carbon dioxide. The sequence is that of 8-amino-7-oxononanoate synthase from Stenotrophomonas maltophilia (strain R551-3).